The primary structure comprises 255 residues: UPF0246 protein Cphy_1568 (255 aa).

Belongs to the UPF0246 family.

The chain is UPF0246 protein Cphy_1568 from Lachnoclostridium phytofermentans (strain ATCC 700394 / DSM 18823 / ISDg) (Clostridium phytofermentans).